We begin with the raw amino-acid sequence, 217 residues long: Small ribosomal subunit protein uS3 (217 aa).

Residues 38–106 form the KH type-2 domain; the sequence is IRNFIKKELA…QVHINIIEIK (69 aa).

Belongs to the universal ribosomal protein uS3 family. As to quaternary structure, part of the 30S ribosomal subunit. Forms a tight complex with proteins S10 and S14.

Its function is as follows. Binds the lower part of the 30S subunit head. Binds mRNA in the 70S ribosome, positioning it for translation. This is Small ribosomal subunit protein uS3 from Streptococcus suis (strain 98HAH33).